Here is a 426-residue protein sequence, read N- to C-terminus: High affinity 3',5'-cyclic-AMP phosphodiesterase 7A (426 aa).

Residues 80–402 (LDEDYNGQAK…ASWKGLQRQQ (323 aa)) form the PDEase domain. The active-site Proton donor is the H156. Positions 160, 196, 197, and 306 each coordinate a divalent metal cation.

This sequence belongs to the cyclic nucleotide phosphodiesterase family. PDE7 subfamily. As to quaternary structure, interacts with CBFA2T3. It depends on a divalent metal cation as a cofactor.

The protein localises to the cytoplasm. The protein resides in the cytosol. It carries out the reaction 3',5'-cyclic AMP + H2O = AMP + H(+). Its pathway is purine metabolism; 3',5'-cyclic AMP degradation; AMP from 3',5'-cyclic AMP: step 1/1. Hydrolyzes the second messenger cAMP, which is a key regulator of many important physiological processes. May have a role in muscle signal transduction. This chain is High affinity 3',5'-cyclic-AMP phosphodiesterase 7A (Pde7a), found in Rattus norvegicus (Rat).